We begin with the raw amino-acid sequence, 406 residues long: 4-hydroxy-3-methylbut-2-en-1-yl diphosphate synthase (ferredoxin) (406 aa).

[4Fe-4S] cluster contacts are provided by cysteine 315, cysteine 318, cysteine 349, and glutamate 356.

Belongs to the IspG family. [4Fe-4S] cluster is required as a cofactor.

It carries out the reaction (2E)-4-hydroxy-3-methylbut-2-enyl diphosphate + 2 oxidized [2Fe-2S]-[ferredoxin] + H2O = 2-C-methyl-D-erythritol 2,4-cyclic diphosphate + 2 reduced [2Fe-2S]-[ferredoxin] + H(+). It functions in the pathway isoprenoid biosynthesis; isopentenyl diphosphate biosynthesis via DXP pathway; isopentenyl diphosphate from 1-deoxy-D-xylulose 5-phosphate: step 5/6. In terms of biological role, converts 2C-methyl-D-erythritol 2,4-cyclodiphosphate (ME-2,4cPP) into 1-hydroxy-2-methyl-2-(E)-butenyl 4-diphosphate. In Trichodesmium erythraeum (strain IMS101), this protein is 4-hydroxy-3-methylbut-2-en-1-yl diphosphate synthase (ferredoxin).